The sequence spans 810 residues: Nuclear pore complex protein NUP88 (810 aa).

The interval M1–P23 is disordered. The stretch at A646–K748 forms a coiled coil.

Part of the nuclear pore complex (NPC). The NPC has an eight-fold symmetrical structure comprising a central transport channel and two rings, the cytoplasmic and nuclear rings, to which eight filaments are attached. The cytoplasmic filaments have loose ends, while the nuclear filaments are joined in a distal ring, forming a nuclear basket. NPCs are highly dynamic in configuration and composition, and can be devided in 3 subcomplexes, the NUP62 subcomplex, the NUP107-160 subcomplex and the NUP93 subcomplex, containing approximately 30 different nucleoporin proteins.

Its subcellular location is the nucleus envelope. The protein resides in the nucleus. It is found in the nuclear pore complex. Involved in the regulation of exportin-mediated nuclear protein export. Required for resistance mediated by multiple R proteins and for the appropriate nuclear accumulation of SNC1 and of the downstream defense signaling components EDS1 and NPR1. Not involved in salt tolerance, ethylene and auxin responses, but required for systemic acquired resistance. The chain is Nuclear pore complex protein NUP88 from Arabidopsis thaliana (Mouse-ear cress).